A 277-amino-acid chain; its full sequence is Large ribosomal subunit protein mL46 (277 aa).

Position 228 is an N6-acetyllysine (K228).

Belongs to the mitochondrion-specific ribosomal protein mL46 family. Component of the mitochondrial ribosome large subunit (39S) which comprises a 16S rRNA and about 50 distinct proteins.

It localises to the mitochondrion. This is Large ribosomal subunit protein mL46 (MRPL46) from Bos taurus (Bovine).